Here is a 193-residue protein sequence, read N- to C-terminus: Ribonuclease HII (193 aa).

Positions 1 to 193 constitute an RNase H type-2 domain; the sequence is MTLGIDEAGR…SFALKNNWFS (193 aa). The a divalent metal cation site is built by aspartate 6, glutamate 7, and aspartate 103.

Belongs to the RNase HII family. It depends on Mn(2+) as a cofactor. Mg(2+) serves as cofactor.

The protein resides in the cytoplasm. It carries out the reaction Endonucleolytic cleavage to 5'-phosphomonoester.. Its function is as follows. Endonuclease that specifically degrades the RNA of RNA-DNA hybrids. This chain is Ribonuclease HII, found in Helicobacter acinonychis (strain Sheeba).